The primary structure comprises 348 residues: Lipopolysaccharide heptosyltransferase 2 (348 aa).

Belongs to the glycosyltransferase 9 family.

The enzyme catalyses an L-alpha-D-Hep-(1-&gt;5)-[alpha-Kdo-(2-&gt;4)]-alpha-Kdo-(2-&gt;6)-lipid A + ADP-L-glycero-beta-D-manno-heptose = an L-alpha-D-Hep-(1-&gt;3)-L-alpha-D-Hep-(1-&gt;5)-[alpha-Kdo-(2-&gt;4)]-alpha-Kdo-(2-&gt;6)-lipid A + ADP + H(+). It carries out the reaction L-alpha-D-Hep-(1-&gt;5)-[alpha-Kdo-(2-&gt;4)]-alpha-Kdo-(2-&gt;6)-lipid A (E. coli) + ADP-L-glycero-beta-D-manno-heptose = L-alpha-D-Hep-(1-&gt;3)-L-alpha-D-Hep-(1-&gt;5)-[alpha-Kdo-(2-&gt;4)]-alpha-Kdo-(2-&gt;6)-lipid A (E. coli) + ADP + H(+). It participates in bacterial outer membrane biogenesis; LPS core biosynthesis. Glycosyltransferase involved in the biosynthesis of the core oligosaccharide region of lipopolysaccharide (LPS). Catalyzes the addition of the second heptose unit to the heptosyl-Kdo2-lipid A module. The analog ADP-mannose can serve as an alternative donor in place of ADP-L-glycero-D-manno-heptose, but with lower efficiency. The protein is Lipopolysaccharide heptosyltransferase 2 of Escherichia coli (strain K12).